The sequence spans 250 residues: 3-deoxy-manno-octulosonate cytidylyltransferase (250 aa).

It belongs to the KdsB family.

The protein localises to the cytoplasm. The catalysed reaction is 3-deoxy-alpha-D-manno-oct-2-ulosonate + CTP = CMP-3-deoxy-beta-D-manno-octulosonate + diphosphate. It functions in the pathway nucleotide-sugar biosynthesis; CMP-3-deoxy-D-manno-octulosonate biosynthesis; CMP-3-deoxy-D-manno-octulosonate from 3-deoxy-D-manno-octulosonate and CTP: step 1/1. Its pathway is bacterial outer membrane biogenesis; lipopolysaccharide biosynthesis. Its function is as follows. Activates KDO (a required 8-carbon sugar) for incorporation into bacterial lipopolysaccharide in Gram-negative bacteria. This chain is 3-deoxy-manno-octulosonate cytidylyltransferase, found in Cytophaga hutchinsonii (strain ATCC 33406 / DSM 1761 / CIP 103989 / NBRC 15051 / NCIMB 9469 / D465).